We begin with the raw amino-acid sequence, 350 residues long: Ferredoxin--NADP reductase (350 aa).

Thr-25, Glu-44, Gln-52, Tyr-57, Val-97, Phe-132, Asp-298, and Ser-339 together coordinate FAD.

It belongs to the ferredoxin--NADP reductase type 2 family. As to quaternary structure, homodimer. Requires FAD as cofactor.

The enzyme catalyses 2 reduced [2Fe-2S]-[ferredoxin] + NADP(+) + H(+) = 2 oxidized [2Fe-2S]-[ferredoxin] + NADPH. The sequence is that of Ferredoxin--NADP reductase from Chlorobium limicola (strain DSM 245 / NBRC 103803 / 6330).